Here is a 993-residue protein sequence, read N- to C-terminus: Signal peptide, CUB and EGF-like domain-containing protein 3 (993 aa).

Positions 1-20 (MGSGRVPGLCLLLLLVHARA) are cleaved as a signal peptide. In terms of domain architecture, EGF-like 1; calcium-binding spans 29–69 (DVDECVEGTDNCHIDAICQNTPRSYKCICKSGYTGDGKHCK). 26 disulfides stabilise this stretch: cysteine 33-cysteine 46, cysteine 40-cysteine 55, cysteine 57-cysteine 68, cysteine 74-cysteine 86, cysteine 82-cysteine 95, cysteine 97-cysteine 110, cysteine 116-cysteine 127, cysteine 123-cysteine 136, cysteine 161-cysteine 172, cysteine 168-cysteine 182, cysteine 184-cysteine 197, cysteine 201-cysteine 212, cysteine 208-cysteine 221, cysteine 223-cysteine 236, cysteine 240-cysteine 251, cysteine 247-cysteine 260, cysteine 262-cysteine 275, cysteine 281-cysteine 292, cysteine 288-cysteine 301, cysteine 303-cysteine 316, cysteine 322-cysteine 332, cysteine 328-cysteine 341, cysteine 343-cysteine 355, cysteine 361-cysteine 372, cysteine 368-cysteine 381, and cysteine 383-cysteine 397. The EGF-like 2; calcium-binding domain occupies 70–111 (DVDECEREDNAGCVHDCVNIPGNYRCTCYDGFHLAHDGHNCL). Residues 112–148 (DVDECAEGNGGCQQSCVNMMGSYECHCRDGFFLSDNQ) enclose the EGF-like 3; calcium-binding domain. 3 EGF-like domains span residues 157 to 198 (EGMN…RDCK), 199 to 237 (LTCN…KTCI), and 238 to 276 (ETCA…KTCK). Positions 277–317 (DIDECRLNNGGCDHICRNTVGSFECSCKKGYKLLINERSCQ) constitute an EGF-like 7; calcium-binding domain. The region spanning 318-356 (DIDECSFDRTCDHMCVNTPGSFQCLCHRGYLLYGVTHCG) is the EGF-like 8; calcium-binding domain. In terms of domain architecture, EGF-like 9; calcium-binding spans 357 to 398 (DVDECSINKGGCRFGCINTPGSYQCTCPAGQGRLHWNGKDCT). N-linked (GlcNAc...) asparagine glycosylation is found at asparagine 417, asparagine 464, asparagine 685, asparagine 756, and asparagine 785. Intrachain disulfides connect cysteine 804–cysteine 830 and cysteine 857–cysteine 878. The CUB domain maps to 804–916 (CGGELGEFTG…RGFQIPYVTY (113 aa)).

In terms of assembly, forms homooligomers. Forms heterooligomers with SCUBE1 and SCUBE2. Interacts with TGFBR2 through the CUB domain; this interaction does not affect TGFB1-binding to TGFBR2. Interacts with BMP2, BMP4 and BMP7; the interaction is mediated by the CUB domain. Interacts with BMPR1A, BMPR1B and BMPR2; the interaction with BMPR1A and BMPR1B is BMP2- and BMP4-dependent. In terms of processing, N-glycosylated. Proteolytic cleavage produces a CUB-containing C-terminal fragment that retains the ability to bind to TGFBR2. This reaction is catalyzed in vitro by MMP2 and, to a lesser extent, by MMP9. In terms of tissue distribution, highly expressed in femur and humerus with little or no expression in non-bone tissues.

The protein localises to the secreted. Its subcellular location is the cell surface. Functionally, is a positive regulator of the BMP signaling pathway, required for proper chondrogenesis, osteogenesis and skeletal development. It acts as a coreceptor for BMP ligands, particularly BMP2 and BMP4, facilitating their interactions with BMP type I receptors. It is required for ligand-induced recruitment of BMP receptors to lipid rafts. Binds to TGFBR2 and activates TGFB signaling. The chain is Signal peptide, CUB and EGF-like domain-containing protein 3 from Mus musculus (Mouse).